The primary structure comprises 448 residues: UDP-N-acetylmuramoyl-L-alanine--L-glutamate ligase (448 aa).

118-124 is an ATP binding site; that stretch reads GSKGKST.

It belongs to the MurCDEF family. MurD2 subfamily.

The protein localises to the cytoplasm. It carries out the reaction UDP-N-acetyl-alpha-D-muramoyl-L-alanine + L-glutamate + ATP = UDP-N-acetyl-alpha-D-muramoyl-L-alanyl-L-glutamate + ADP + phosphate + H(+). It participates in cell wall biogenesis; peptidoglycan biosynthesis. In terms of biological role, cell wall formation. Catalyzes the addition of L-glutamate to the nucleotide precursor UDP-N-acetylmuramoyl-L-alanine. This chain is UDP-N-acetylmuramoyl-L-alanine--L-glutamate ligase, found in Salinispora tropica (strain ATCC BAA-916 / DSM 44818 / JCM 13857 / NBRC 105044 / CNB-440).